The primary structure comprises 387 residues: Phosphoglycerate kinase (387 aa).

Substrate-binding positions include 21–23 (DLN), arginine 36, 59–62 (HLGR), arginine 113, and arginine 146. Residues lysine 197, glutamate 314, and 340 to 343 (GGDT) contribute to the ATP site.

It belongs to the phosphoglycerate kinase family. Monomer.

It is found in the cytoplasm. It catalyses the reaction (2R)-3-phosphoglycerate + ATP = (2R)-3-phospho-glyceroyl phosphate + ADP. Its pathway is carbohydrate degradation; glycolysis; pyruvate from D-glyceraldehyde 3-phosphate: step 2/5. In Pseudomonas putida (strain ATCC 700007 / DSM 6899 / JCM 31910 / BCRC 17059 / LMG 24140 / F1), this protein is Phosphoglycerate kinase.